The sequence spans 329 residues: Acetyl-coenzyme A carboxylase carboxyl transferase subunit alpha (329 aa).

The CoA carboxyltransferase C-terminal domain occupies 40 to 294 (QLETLAARRR…KNALEKHLSE (255 aa)).

This sequence belongs to the AccA family. Acetyl-CoA carboxylase is a heterohexamer composed of biotin carboxyl carrier protein (AccB), biotin carboxylase (AccC) and two subunits each of ACCase subunit alpha (AccA) and ACCase subunit beta (AccD).

It localises to the cytoplasm. The catalysed reaction is N(6)-carboxybiotinyl-L-lysyl-[protein] + acetyl-CoA = N(6)-biotinyl-L-lysyl-[protein] + malonyl-CoA. The protein operates within lipid metabolism; malonyl-CoA biosynthesis; malonyl-CoA from acetyl-CoA: step 1/1. Component of the acetyl coenzyme A carboxylase (ACC) complex. First, biotin carboxylase catalyzes the carboxylation of biotin on its carrier protein (BCCP) and then the CO(2) group is transferred by the carboxyltransferase to acetyl-CoA to form malonyl-CoA. In Prochlorococcus marinus (strain NATL1A), this protein is Acetyl-coenzyme A carboxylase carboxyl transferase subunit alpha.